The chain runs to 94 residues: MGGPHAKAYMGWWGSIGSPAQKGITTYTVSPYAQKPLNNIFHNAVFNTFRRVKSQILYMALPAALYWAWWVNCRDYNAYLYTKAGREELERVNV.

Topologically, residues 1-49 are mitochondrial matrix; sequence MGGPHAKAYMGWWGSIGSPAQKGITTYTVSPYAQKPLNNIFHNAVFNTF. A helical transmembrane segment spans residues 50-80; sequence RRVKSQILYMALPAALYWAWWVNCRDYNAYL. Over 81 to 94 the chain is Mitochondrial intermembrane; it reads YTKAGREELERVNV.

It belongs to the UQCRQ/QCR8 family. In terms of assembly, component of the ubiquinol-cytochrome c oxidoreductase (cytochrome b-c1 complex, complex III, CIII), a multisubunit enzyme composed of 3 respiratory subunits cytochrome b, cytochrome c1 and Rieske protein, 2 core protein subunits, and additional low-molecular weight protein subunits. The complex exists as an obligatory dimer and forms supercomplexes (SCs) in the inner mitochondrial membrane with cytochrome c oxidase (complex IV, CIV).

It localises to the mitochondrion inner membrane. Functionally, component of the ubiquinol-cytochrome c oxidoreductase, a multisubunit transmembrane complex that is part of the mitochondrial electron transport chain which drives oxidative phosphorylation. The respiratory chain contains 3 multisubunit complexes succinate dehydrogenase (complex II, CII), ubiquinol-cytochrome c oxidoreductase (cytochrome b-c1 complex, complex III, CIII) and cytochrome c oxidase (complex IV, CIV), that cooperate to transfer electrons derived from NADH and succinate to molecular oxygen, creating an electrochemical gradient over the inner membrane that drives transmembrane transport and the ATP synthase. The cytochrome b-c1 complex catalyzes electron transfer from ubiquinol to cytochrome c, linking this redox reaction to translocation of protons across the mitochondrial inner membrane, with protons being carried across the membrane as hydrogens on the quinol. In the process called Q cycle, 2 protons are consumed from the matrix, 4 protons are released into the intermembrane space and 2 electrons are passed to cytochrome c. This chain is Cytochrome b-c1 complex subunit 8 (QCR8), found in Kluyveromyces lactis (strain ATCC 8585 / CBS 2359 / DSM 70799 / NBRC 1267 / NRRL Y-1140 / WM37) (Yeast).